The sequence spans 203 residues: Outer-membrane lipoprotein carrier protein (203 aa).

Residues 1–21 (MKKMAIACALLSSVVASSVWA) form the signal peptide. The tract at residues 178-203 (QQNGAVDPSKFTFTPPQGVTIDDQRK) is disordered.

This sequence belongs to the LolA family. In terms of assembly, monomer.

It is found in the periplasm. Functionally, participates in the translocation of lipoproteins from the inner membrane to the outer membrane. Only forms a complex with a lipoprotein if the residue after the N-terminal Cys is not an aspartate (The Asp acts as a targeting signal to indicate that the lipoprotein should stay in the inner membrane). The protein is Outer-membrane lipoprotein carrier protein of Salmonella paratyphi A (strain ATCC 9150 / SARB42).